Reading from the N-terminus, the 139-residue chain is Transcription antitermination protein NusB (139 aa).

It belongs to the NusB family.

Its function is as follows. Involved in transcription antitermination. Required for transcription of ribosomal RNA (rRNA) genes. Binds specifically to the boxA antiterminator sequence of the ribosomal RNA (rrn) operons. The chain is Transcription antitermination protein NusB from Limosilactobacillus fermentum (strain NBRC 3956 / LMG 18251) (Lactobacillus fermentum).